The following is a 132-amino-acid chain: Small ribosomal subunit protein uS8 (132 aa).

Belongs to the universal ribosomal protein uS8 family. Part of the 30S ribosomal subunit. Contacts proteins S5 and S12.

Its function is as follows. One of the primary rRNA binding proteins, it binds directly to 16S rRNA central domain where it helps coordinate assembly of the platform of the 30S subunit. The polypeptide is Small ribosomal subunit protein uS8 (Heliobacterium modesticaldum (strain ATCC 51547 / Ice1)).